The primary structure comprises 466 residues: MLPSTIQTLTLFLTSGGVLLSLYVSASLSYLLYSDILLKFSPTEITAPKVPLDCANASNVQAVNRSATKGMTLLLSEPEWTYPRLSCQGSTFQKALLISPHRFGESRGNSAPLIIREPFIACGPKECKHFALTHYAAQPGGYYNGTREDRNKLRHLISVKLGKIPTVENSIFHMAAWSGSACHDGREWTYIGVDGPDSNALIKIKYGEAYTDTYHSYANNILRTQESACNCIGGDCYLMITDGSASGISKCRFLKIREGRIIKEIFPTGRVEHTEECTCGFASNKTIECACRDNSYTAKRPFVKLNVETDTAEIRLMCTETYLDTPRPDDGSITGPCESNGDKGRGGIKGGFVHQRMASKIGRWYSRTMSKTERMGMELYVKYDGDPWTDSDALAPSGVMVSMKEPGWYSFGFEIKDKKCDVPCIGIEMVHDGGKKTWHSAATAIYCLMGSGQLLWDTVTGVDMAL.

The Intravirion portion of the chain corresponds to 1–8 (MLPSTIQT). Residues 9–31 (LTLFLTSGGVLLSLYVSASLSYL) traverse the membrane as a helical segment. The involved in apical transport and lipid raft association stretch occupies residues 13-35 (LTSGGVLLSLYVSASLSYLLYSD). Residues 32–466 (LYSDILLKFS…DTVTGVDMAL (435 aa)) are Virion surface-facing. The interval 38 to 86 (LKFSPTEITAPKVPLDCANASNVQAVNRSATKGMTLLLSEPEWTYPRLS) is hypervariable stalk region. N-linked (GlcNAc...) asparagine; by host glycans are attached at residues Asn56 and Asn64. 8 disulfides stabilise this stretch: Cys87/Cys420, Cys122/Cys127, Cys182/Cys229, Cys231/Cys236, Cys277/Cys291, Cys279/Cys289, Cys318/Cys337, and Cys424/Cys447. Positions 89–466 (GSTFQKALLI…DTVTGVDMAL (378 aa)) are head of neuraminidase. Arg116 provides a ligand contact to substrate. Residue Asn144 is glycosylated (N-linked (GlcNAc...) asparagine; by host). The Proton donor/acceptor role is filled by Asp149. Residue Arg150 participates in substrate binding. 275–276 (EE) contacts substrate. Asn284 is a glycosylation site (N-linked (GlcNAc...) asparagine; by host). Arg292 lines the substrate pocket. Ca(2+) contacts are provided by Asp293 and Asp324. Arg374 is a substrate binding site. Tyr409 acts as the Nucleophile in catalysis.

This sequence belongs to the glycosyl hydrolase 34 family. As to quaternary structure, homotetramer. The cofactor is Ca(2+). Post-translationally, N-glycosylated.

The protein localises to the virion membrane. The protein resides in the host apical cell membrane. The enzyme catalyses Hydrolysis of alpha-(2-&gt;3)-, alpha-(2-&gt;6)-, alpha-(2-&gt;8)- glycosidic linkages of terminal sialic acid residues in oligosaccharides, glycoproteins, glycolipids, colominic acid and synthetic substrates.. Its activity is regulated as follows. Inhibited by the neuraminidase inhibitors zanamivir (Relenza) and oseltamivir (Tamiflu). These drugs interfere with the release of progeny virus from infected cells and are effective against all influenza strains. Resistance to neuraminidase inhibitors is quite rare. Its function is as follows. Catalyzes the removal of terminal sialic acid residues from viral and cellular glycoconjugates. Cleaves off the terminal sialic acids on the glycosylated HA during virus budding to facilitate virus release. Additionally helps virus spread through the circulation by further removing sialic acids from the cell surface. These cleavages prevent self-aggregation and ensure the efficient spread of the progeny virus from cell to cell. Otherwise, infection would be limited to one round of replication. Described as a receptor-destroying enzyme because it cleaves a terminal sialic acid from the cellular receptors. May facilitate viral invasion of the upper airways by cleaving the sialic acid moieties on the mucin of the airway epithelial cells. Likely to plays a role in the budding process through its association with lipid rafts during intracellular transport. May additionally display a raft-association independent effect on budding. Plays a role in the determination of host range restriction on replication and virulence. Sialidase activity in late endosome/lysosome traffic seems to enhance virus replication. In Homo sapiens (Human), this protein is Neuraminidase.